A 257-amino-acid polypeptide reads, in one-letter code: Type 2 phosphatidylinositol 4,5-bisphosphate 4-phosphatase (257 aa).

A compositionally biased stretch (basic and acidic residues) spans 1–10; it reads MAADGVDERS. A disordered region spans residues 1-34; that stretch reads MAADGVDERSPLLSASHSGSVTPTAPPYLQDSSP. Positions 13–23 are enriched in polar residues; sequence LSASHSGSVTP. The residue at position 22 (Thr22) is a Phosphothreonine. Phosphoserine is present on Ser33. Cys107 is a catalytic residue. The CX5R motif signature appears at 107-113; it reads CKDTSRR. The next 2 helical transmembrane spans lie at 192 to 212 and 227 to 247; these read CCAY…LTVG and WAIA…WGAI.

Its subcellular location is the late endosome membrane. It is found in the lysosome membrane. The protein localises to the cytoplasmic vesicle. It localises to the phagosome membrane. The protein resides in the cell membrane. It catalyses the reaction a 1,2-diacyl-sn-glycero-3-phospho-(1D-myo-inositol-4,5-bisphosphate) + H2O = a 1,2-diacyl-sn-glycero-3-phospho-(1D-myo-inositol-5-phosphate) + phosphate. Its function is as follows. Catalyzes the hydrolysis of phosphatidylinositol-4,5-bisphosphate (PtdIns-4,5-P2) to phosphatidylinositol-4-phosphate (PtdIns-4-P). Does not hydrolyze phosphatidylinositol 3,4,5-trisphosphate, phosphatidylinositol 3,4-bisphosphate, inositol 3,5-bisphosphate, inositol 3,4-bisphosphate, phosphatidylinositol 5-monophosphate, phosphatidylinositol 4-monophosphate and phosphatidylinositol 3-monophosphate. Negatively regulates the phagocytosis of large particles by reducing phagosomal phosphatidylinositol 4,5-bisphosphate accumulation during cup formation. This Bos taurus (Bovine) protein is Type 2 phosphatidylinositol 4,5-bisphosphate 4-phosphatase.